Here is a 673-residue protein sequence, read N- to C-terminus: MLKLFSAFRKDKIWDFDGGIHPPEMKTQSNGTPLRQIPLAPRFVIPLKQHIGAEGELCVSVGDRVLRGQALTHGRGKMLPVHAPTSGTVIAVAPHSTAHPSALAELSVIIDADGEDRWIEREGWSDYRAHSREALIERIHQYGVAGLGGAGFPTGVKLQGGIDKITTLIINAAECEPYITADDRLMQDCAAQIVEGIRILAYILQPREVLIGIEDNKPQAISMLRAVLADAHDISLRVIPTKYPSGGAKQLTQILTGKQVPHGGRSSDIGVLMQNVGTAYAVKRAVVDGEPITERVVTLTGEAVSRPGNIWARLGTPVRHLLNNAGFCPSADQMVIMGGPLMGFTLPWLDVPVVKITNCLLAPSATEMGAPQEETSCIRCSACADACPADLLPQQLYWFSKGQQHDKATAHHIADCIECGACAWVCPSNIPLVQYFRQEKAEINAIRLEEKRAAEAKARFEARQARLEREKAARLARHKSAAVQPAAKDQDAIAAALARVKEKQAQATQPVIIQAGSLPDNSAAIAAREARKAQARAKQAGHPMADSATSGDDPRKAAVEAAVARAKARKQEQQAISEAAEPVDPRKAAVEAAIARAKARKQEQQAVSEAAEPVDPRKAAVEAAIARAKARKQEQQAVSVPVEPVDPRKAAVAAAIARVQAKKAAQQQVVNEE.

4Fe-4S ferredoxin-type domains are found at residues 368-397 and 407-436; these read MGAP…QQLY and KATA…VQYF. [4Fe-4S] cluster contacts are provided by C377, C380, C383, C387, C416, C419, C422, and C426. The disordered stretch occupies residues 529–554; it reads EARKAQARAKQAGHPMADSATSGDDP.

The protein belongs to the 4Fe4S bacterial-type ferredoxin family. RnfC subfamily. The complex is composed of six subunits: RsxA, RsxB, RsxC, RsxD, RsxE and RsxG. It depends on [4Fe-4S] cluster as a cofactor.

Its subcellular location is the cell inner membrane. Functionally, part of a membrane-bound complex that couples electron transfer with translocation of ions across the membrane. Required to maintain the reduced state of SoxR. The chain is Ion-translocating oxidoreductase complex subunit C from Salmonella arizonae (strain ATCC BAA-731 / CDC346-86 / RSK2980).